We begin with the raw amino-acid sequence, 181 residues long: ADP-ribosylation factor 2 (181 aa).

The N-myristoyl glycine moiety is linked to residue glycine 2. Residues 24–31 (GLDAAGKT), 67–71 (DVGGQ), and 126–129 (NKQD) contribute to the GTP site.

The protein belongs to the small GTPase superfamily. Arf family.

Its subcellular location is the golgi apparatus. Its function is as follows. GTP-binding protein that functions as an allosteric activator of the cholera toxin catalytic subunit, an ADP-ribosyltransferase. Involved in protein trafficking; may modulate vesicle budding and uncoating within the Golgi apparatus. This chain is ADP-ribosylation factor 2 (ARF2), found in Bos taurus (Bovine).